We begin with the raw amino-acid sequence, 105 residues long: Translation initiation factor 1A 2 (105 aa).

The segment at 1 to 22 is disordered; that stretch reads MRKRREGSAAPSTQEVTRVRTP. The 75-residue stretch at 17-91 folds into the S1-like domain; sequence TRVRTPRKEN…TKADVIWKYT (75 aa).

This sequence belongs to the eIF-1A family.

In terms of biological role, seems to be required for maximal rate of protein biosynthesis. Enhances ribosome dissociation into subunits and stabilizes the binding of the initiator Met-tRNA(I) to 40 S ribosomal subunits. The polypeptide is Translation initiation factor 1A 2 (eIF1A2) (Methanosarcina acetivorans (strain ATCC 35395 / DSM 2834 / JCM 12185 / C2A)).